Reading from the N-terminus, the 325-residue chain is uncharacterized protein (325 aa).

A disordered region spans residues 1–75 (MSQPPEHPGN…PPPGYPTHLQ (75 aa)). The span at 24–70 (YPPPGYGAPPPPPGYGPPPGTYLPPGYNAPPPPPGYGPPPGPPPPGY) shows a compositional bias: pro residues. The next 4 membrane-spanning stretches (helical) occupy residues 96-116 (AVTL…VIGA), 153-173 (IVMF…HAGI), 205-225 (LLIV…GLIF), and 273-293 (LVGE…AALI).

The protein resides in the cell membrane. This is an uncharacterized protein from Mycobacterium tuberculosis (strain ATCC 25618 / H37Rv).